A 948-amino-acid chain; its full sequence is Zinc finger CCCH domain-containing protein 3 (948 aa).

Disordered regions lie at residues 25–108 (HGNA…VPQQ), 121–219 (QNVV…RRTV), 265–296 (VDAG…REAS), and 336–493 (NVCK…LKKT). Residues 56-74 (RPSRRGYSSHHGPSWRKKY) show a composition bias toward basic residues. The segment covering 128–141 (KPPSKSGSASASGA) has biased composition (low complexity). Over residues 157 to 166 (QRPREGEGEP) the composition is skewed to basic and acidic residues. Low complexity predominate over residues 372–398 (SAPSKYKWKASSPSASSSSSFRWQSEA). The span at 405–415 (SQLSPVLSRSP) shows a compositional bias: polar residues. Position 408 is a phosphoserine (S408). Over residues 441-452 (VKSRTKIIRRRS) the composition is skewed to basic residues. 5 consecutive C3H1-type zinc fingers follow at residues 667–695 (EKRK…HDPE), 699–722 (VCTR…HHVS), 723–749 (KEKM…HVYV), 750–777 (SRKA…HTLL), and 778–800 (CPDF…HRTQ). 2 disordered regions span residues 798–891 (RTQK…HEAP) and 913–948 (ISLQ…KPRL). The span at 834–846 (SASQRPTRQTPSS) shows a compositional bias: polar residues. Composition is skewed to low complexity over residues 847 to 856 (AALTAAAVAA) and 864 to 885 (SASP…PPAS). Phosphoserine is present on residues S918 and S920.

Interacts with SMAD1, SMAD3, SMAD4, CPSF2 and CPSF3.

Its subcellular location is the nucleus. Its function is as follows. Required for the export of polyadenylated mRNAs from the nucleus. Enhances ACVR1B-induced SMAD-dependent transcription. Binds to single-stranded DNA but not to double-stranded DNA in vitro. Involved in RNA cleavage. The sequence is that of Zinc finger CCCH domain-containing protein 3 (ZC3H3) from Homo sapiens (Human).